The sequence spans 211 residues: Arginine exporter protein ArgO (211 aa).

Transmembrane regions (helical) follow at residues 1–21, 37–57, 68–88, 111–131, 147–167, and 179–199; these read MISYYFQGFALGAAMILPLGP, LMIALLCALSDLVLISAGIFG, LLALVTWGGVAFLLWYGFGAL, IIATMLAVTWLNPHVYLDTFV, WFALGTISASFLWFFGLALLA, and AQRIINILVGVVMWLIAFQLA.

Belongs to the LysE/ArgO transporter (TC 2.A.75) family.

Its subcellular location is the cell inner membrane. It catalyses the reaction L-arginine(in) = L-arginine(out). Its function is as follows. Involved in the export of arginine. Important to control the intracellular level of arginine and the correct balance between arginine and lysine. The sequence is that of Arginine exporter protein ArgO from Salmonella typhimurium (strain LT2 / SGSC1412 / ATCC 700720).